We begin with the raw amino-acid sequence, 390 residues long: Trehalose-phosphate phosphatase (390 aa).

Aspartate 150 serves as the catalytic Nucleophile. 3 residues coordinate Mg(2+): aspartate 150, aspartate 152, and aspartate 333. 150–152 serves as a coordination point for substrate; it reads DFD.

The protein belongs to the trehalose phosphatase family. Mg(2+) is required as a cofactor.

The catalysed reaction is alpha,alpha-trehalose 6-phosphate + H2O = alpha,alpha-trehalose + phosphate. It participates in glycan biosynthesis; trehalose biosynthesis. Removes the phosphate from trehalose 6-phosphate to produce free trehalose. The chain is Trehalose-phosphate phosphatase (otsB) from Mycobacterium marinum (strain ATCC BAA-535 / M).